We begin with the raw amino-acid sequence, 576 residues long: Type II restriction enzyme BsuRI (576 aa).

In terms of assembly, monomer. The cofactor is Mg(2+).

The catalysed reaction is Endonucleolytic cleavage of DNA to give specific double-stranded fragments with terminal 5'-phosphates.. A P subtype restriction enzyme that recognizes the double-stranded sequence 5'-GGCC-3' and cleaves after G-2. This is Type II restriction enzyme BsuRI (hsdRR) from Bacillus subtilis.